We begin with the raw amino-acid sequence, 1205 residues long: Nitric oxide synthase 3 (1205 aa).

Residues 1–73 are disordered; sequence MGNLKSVGQE…PPEGPKFPRV (73 aa). Gly2 carries the N-myristoyl glycine lipid modification. 2 S-palmitoyl cysteine lipidation sites follow: Cys15 and Cys26. Gly residues predominate over residues 15–27; sequence CGLGLGLGLGLCG. Residues 33–47 show a composition bias toward pro residues; it reads SPAPEPSRAPAPATP. Zn(2+) is bound by residues Cys96 and Cys101. Positions 100-488 are interaction with NOSIP; the sequence is CCLGSLVLPR…PDPWKGSATK (389 aa). Ser104 provides a ligand contact to (6R)-L-erythro-5,6,7,8-tetrahydrobiopterin. At Ser116 the chain carries Phosphoserine; by CDK5. Cys186 is a heme b binding site. L-arginine-binding residues include Gln249, Trp358, Tyr359, Glu363, and Asn368. 3 residues coordinate (6R)-L-erythro-5,6,7,8-tetrahydrobiopterin: Ala448, Trp449, and Phe462. Position 477 (Tyr477) interacts with heme b. The segment at 492-512 is calmodulin-binding; it reads ITRKKTFKEVANAVKISASLM. Thr497 is modified (phosphothreonine; by AMPK and PKA). Positions 522-705 constitute a Flavodoxin-like domain; it reads ATILYASETG…AFRGWAKAAF (184 aa). Residues Ser528, Glu529, Thr530, Arg532, Ser574, and Thr575 each coordinate FMN. 3 positions are modified to phosphoserine: Ser617, Ser635, and Ser640. FMN is bound by residues Ser656, Cys663, Glu689, and Gln693. Residues 758–1004 form the FAD-binding FR-type domain; that stretch reads RKMFQATVLS…IRGAPSFRLP (247 aa). Residue Arg778 participates in NADP(+) binding. His800 is an FAD binding site. Residues 820-847 form a disordered region; the sequence is EDPPPPTESVAVEQLEKGSPGGPPPSWV. Phosphoserine is present on Ser838. The FAD site is built by Arg940, Tyr942, Ser943, Thr958, Ala960, Tyr964, Val977, Cys978, and Ser979. NADP(+)-binding residues include Thr1018, Arg1051, Ser1080, Arg1081, Lys1087, Tyr1089, and Gln1091. Residue Thr1177 is modified to Phosphothreonine. Ser1179 carries the post-translational modification Phosphoserine; by AMPK, PDPK1 and PKA. The residue at position 1181 (Ser1181) is a Phosphoserine.

Belongs to the NOS family. As to quaternary structure, homodimer. Interacts with NOSIP and NOSTRIN. Interacts with HSP90AB1. Forms a complex with ASL, ASS1 and SLC7A1; the complex regulates cell-autonomous L-arginine synthesis and citrulline recycling while channeling extracellular L-arginine to nitric oxide synthesis pathway. The cofactor is heme b. Requires FAD as cofactor. FMN serves as cofactor. It depends on (6R)-L-erythro-5,6,7,8-tetrahydrobiopterin as a cofactor. In terms of processing, phosphorylation by AMPK at Ser-1179 in the presence of Ca(2+)-calmodulin (CaM) activates activity. In absence of Ca(2+)-calmodulin, AMPK also phosphorylates Thr-497, resulting in inhibition of activity. Phosphorylation of Ser-116 by CDK5 reduces activity.

The protein localises to the cell membrane. Its subcellular location is the membrane. It is found in the caveola. The protein resides in the cytoplasm. It localises to the cytoskeleton. The protein localises to the golgi apparatus. The catalysed reaction is 2 L-arginine + 3 NADPH + 4 O2 + H(+) = 2 L-citrulline + 2 nitric oxide + 3 NADP(+) + 4 H2O. Its activity is regulated as follows. Stimulated by calcium/calmodulin. Inhibited by NOSIP and NOSTRIN. Its function is as follows. Produces nitric oxide (NO) which is implicated in vascular smooth muscle relaxation through a cGMP-mediated signal transduction pathway. NO mediates vascular endothelial growth factor (VEGF)-induced angiogenesis in coronary vessels and promotes blood clotting through the activation of platelets. The sequence is that of Nitric oxide synthase 3 (NOS3) from Bos taurus (Bovine).